A 156-amino-acid polypeptide reads, in one-letter code: 6,7-dimethyl-8-ribityllumazine synthase (156 aa).

Residues phenylalanine 23, alanine 57–glutamate 59, and alanine 81–isoleucine 83 contribute to the 5-amino-6-(D-ribitylamino)uracil site. Serine 86 to threonine 87 serves as a coordination point for (2S)-2-hydroxy-3-oxobutyl phosphate. The active-site Proton donor is the histidine 89. Residue phenylalanine 114 coordinates 5-amino-6-(D-ribitylamino)uracil. A (2S)-2-hydroxy-3-oxobutyl phosphate-binding site is contributed by arginine 128.

The protein belongs to the DMRL synthase family.

It carries out the reaction (2S)-2-hydroxy-3-oxobutyl phosphate + 5-amino-6-(D-ribitylamino)uracil = 6,7-dimethyl-8-(1-D-ribityl)lumazine + phosphate + 2 H2O + H(+). The protein operates within cofactor biosynthesis; riboflavin biosynthesis; riboflavin from 2-hydroxy-3-oxobutyl phosphate and 5-amino-6-(D-ribitylamino)uracil: step 1/2. Functionally, catalyzes the formation of 6,7-dimethyl-8-ribityllumazine by condensation of 5-amino-6-(D-ribitylamino)uracil with 3,4-dihydroxy-2-butanone 4-phosphate. This is the penultimate step in the biosynthesis of riboflavin. The chain is 6,7-dimethyl-8-ribityllumazine synthase from Sulfurospirillum multivorans (Dehalospirillum multivorans).